Reading from the N-terminus, the 8081-residue chain is Muscle M-line assembly protein unc-89 (8081 aa).

Residues 24–57 (DVNYSTHSSRSSYRSESLTSRTDGRGRSTSSEII) are disordered. A compositionally biased stretch (low complexity) spans 28–54 (STHSSRSSYRSESLTSRTDGRGRSTSS). The SH3 domain maps to 63-127 (RSYPVYIAIQ…PGSYFETPTE (65 aa)). One can recognise a DH domain in the interval 152–330 (KRDQVYHELL…TTIPQRVHDL (179 aa)). The 157-residue stretch at 342 to 498 (DTGKLGRIIR…WSGSRKSSLF (157 aa)) folds into the PH domain. The span at 479-495 (ASDQQSEFSEWSGSRKS) shows a compositional bias: polar residues. The interval 479-531 (ASDQQSEFSEWSGSRKSSLFPGPEEGGPPRKKVKSPPVISPTGSSTSIYSGGS) is disordered. Positions 518 to 531 (SPTGSSTSIYSGGS) are enriched in low complexity. 6 consecutive Ig-like C2-type domains span residues 547 to 633 (GTRV…ASTS), 648 to 736 (PAFV…AELF), 748 to 838 (PEFQ…LKVR), 946 to 1033 (PTFL…ARLV), 1044 to 1132 (PKFV…AKLT), and 1140 to 1227 (PEFD…NTLG). C568 and C621 are oxidised to a cystine. 2 stretches are compositionally biased toward low complexity: residues 1283–1303 (STKT…GVTV) and 1326–1335 (EGSISVSKIE). The segment at 1283–1892 (STKTTTMSTT…PAPKLTRDLK (610 aa)) is disordered. Composition is skewed to basic and acidic residues over residues 1336-1351 (VVSK…EGTP), 1361-1446 (ELPK…KEKS), 1453-1490 (KTGD…EKSP), 1515-1585 (MTHE…KSPE), 1592-1832 (KKSE…KEKS), and 1839-1857 (KTGD…EKPK). RCSD domains lie at 1375–1475 (KSPS…KSPE), 1479–1585 (DVKS…KSPE), 1597–1695 (EVKS…KSPQ), and 1700–1799 (KPAS…KSPE). Pro residues predominate over residues 1858–1868 (SPTPKKSPPGS). The segment covering 1875 to 1892 (KSPEAEKPPAPKLTRDLK) has biased composition (basic and acidic residues). 41 Ig-like C2-type domains span residues 1982 to 2067 (PEFT…AQLT), 2071 to 2163 (PSTT…ADLK), 2171 to 2261 (PKFK…AKVT), 2269 to 2359 (PEFV…AQLK), 2367 to 2455 (PKFT…VQLA), 2463 to 2564 (PTFA…AKPA), 2563 to 2651 (PAFQ…GPLK), 2657 to 2746 (PVEF…ATLL), 2754 to 2858 (PDFL…SEAQ), 2887 to 2980 (PKFI…ATLT), 2994 to 3081 (PEFI…AFLT), 3087 to 3183 (PVFT…SKIT), 3189 to 3280 (PVFE…AEVT), 3286 to 3376 (PTFV…ANFA), 3384 to 3469 (PEFV…EALT), 3482 to 3572 (PEFT…ANMA), 3580 to 3667 (PLFV…ETVG), 3686 to 3777 (PLFI…LKIQ), 3817 to 3908 (PEFV…IIVT), 3920 to 4009 (PDFL…VTLT), 4018 to 4106 (PGFF…VPLT), 4109 to 4201 (PSET…ATVT), 4212 to 4297 (PSFK…AKVN), 4302 to 4387 (PEIV…AALT), 4400 to 4485 (PEIV…AALT), 4489 to 4580 (PGIA…CALT), 4588 to 4678 (PKII…GKIT), 4681 to 4771 (PKIT…AQLT), 4873 to 4961 (PEIV…AALT), 4965 to 5057 (PNVL…GSVV), 5067 to 5160 (PTSG…CKVT), 5171 to 5260 (PKFV…CEFQ), 5277 to 5366 (PRFN…ATYQ), 5383 to 5472 (PKIN…CSVN), 5487 to 5578 (PFFT…AHVQ), 5595 to 5685 (PKFI…SFVR), 5701 to 5790 (PRFT…GTAT), 5815 to 5904 (PKLM…CDVN), 5925 to 6014 (PGFT…AELV), 6038 to 6130 (PRIR…GSLN), and 6150 to 6239 (PGFV…AVLD). C2582 and C2635 form a disulfide bridge. 2 disulfides stabilise this stretch: C2908–C2964 and C3015–C3065. 2 cysteine pairs are disulfide-bonded: C3707/C3759 and C3838/C3890. Residues 4525 to 4553 (KNGKEITPSDKAQPGSDGDNKPQLVIPDA) form a disordered region. Intrachain disulfides connect C5298/C5350, C5404/C5456, C5508/C5560, and C5616/C5669. Disulfide bonds link C5836–C5888 and C5946–C5998. Residues 6278–6374 (PDRGPFIKEV…SPPSRLMAPP (97 aa)) enclose the Fibronectin type-III 1 domain. Ig-like C2-type domains follow at residues 6413-6502 (PGVV…IMVD) and 6507-6596 (PNFI…CTVT). The 287-residue stretch at 6592–6878 (SCTVTVEAEG…VDEALDHPWI (287 aa)) folds into the Protein kinase 1 domain. 5 disordered regions span residues 6954-7130 (KKPP…QQKI), 7177-7217 (QVEA…PQPQ), 7284-7311 (PAIN…LSPR), 7324-7343 (RGKP…DDED), and 7348-7372 (DRKK…ERLE). A compositionally biased stretch (pro residues) spans 6999 to 7009 (RQPPQIPPQPQ). Positions 7087–7110 (LEKRKLIPQDKGETPSHSKKEKTQ) are enriched in basic and acidic residues. Residues 7200–7215 (KPTPSPTSPQKSPVPQ) are compositionally biased toward pro residues. A compositionally biased stretch (polar residues) spans 7284 to 7302 (PAINLSPNPKSPRRSTPGT). The Ig-like C2-type 50 domain maps to 7528–7617 (PIFTARLRDV…TDKSSCRLIS (90 aa)). An intrachain disulfide couples C7549 to C7600. The Fibronectin type-III 2 domain maps to 7623-7721 (RPGRPEAELS…SSRIVQTHGK (99 aa)). The tract at residues 7746-7773 (STNQLGGISEESEEDSEARTANEDMKSN) is disordered. Residues 7762 to 7771 (EARTANEDMK) are compositionally biased toward basic and acidic residues. One can recognise a Protein kinase 2 domain in the interval 7785-8035 (FQIGGLKFKG…TDEALSHKFL (251 aa)).

Belongs to the protein kinase superfamily. CAMK Ser/Thr protein kinase family. In terms of assembly, may interact (via fibronectin type-III domain 1, Ig-like C2-type domain 48/49 and protein kinase domain 1 or C-terminus of the interkinase region) with lim-9 (via LIM zinc-binding domain). May interact (via fibronectin type-III domain 1, Ig-like C2-type domain 48/49 and kinase protein domain 1 or Ig-like C2-type domain 50, fibronectin type-III domain 2 and kinase protein domain 2) with scpl-1 isoforms a and b (via FCP1 homology domain); the interaction may act as a molecular bridge to bring two unc-89 molecules together or to stabilize a loop between the 2 kinase domains. May interact (via SH3 domain) with unc-15. May interact (via Ig-like C2-type domain 1-3) with cpna-1 (via VWFA domain). May interact (via Ig-like C2-type domain 2/3 and, Ig-like C2-type domain 50 and fibronectin type-III domain 2) with mel-26 (via MATH domain). May interact (via DH and PH domains) with rho-1, ced-10, mig-2 and cdc-42. As to expression, expressed in body-wall, pharyngeal muscles and a few muscle cells of the tail (at protein level). Expressed in gonadal myoepithelial sheath cells (at protein level). Isoform c: Expressed in body wall and vulval muscles but not in pharyngeal muscles. Isoform d: Specifically expressed in vulval, intestinal, anal depressor and anal sphincter muscles.

The protein resides in the cytoplasm. The protein localises to the myofibril. Its subcellular location is the sarcomere. It is found in the m line. Its function is as follows. Structural component of the muscle M line which is involved in assembly and organization of sarcomere myofilaments. The large isoform a, isoform b, isoform d and isoform f play an essential role in maintaining the organization of sarcomeres but not myofilament alignment during body wall muscle development whereas the small isoform c and isoform d appear to have a minor role. Isoform b and isoform f are required for the organization of unc-15/paramyosin into sarcomere thick filaments in body wall muscles. By binding mel-26, a substrate adapter of the cul-3 E3 ubiquitin-protein ligase complex, regulates the organization of myosin thick filaments, likely by preventing the degradation of microtubule severing protein mei-1. Acts as a guanine nucleotide exchange factor (GEF) for Rho GTPase rho-1 but not ced-10, mig-2 and cdc-42. The large isoforms regulate Ca(2+) signaling during muscle contraction by ensuring the correct localization of sarco-endoplamic reticulum Ca(2+) ATPase sca-1 and ryanodine receptor unc-68. By controlling the contraction and/or organization of pharyngeal muscles, plays a role in the formation of pharyngeal gland cell extension. The chain is Muscle M-line assembly protein unc-89 (unc-89) from Caenorhabditis elegans.